A 70-amino-acid polypeptide reads, in one-letter code: Putative membrane protein insertion efficiency factor (70 aa).

The protein belongs to the UPF0161 family.

The protein localises to the cell membrane. Its function is as follows. Could be involved in insertion of integral membrane proteins into the membrane. The protein is Putative membrane protein insertion efficiency factor of Chloroflexus aurantiacus (strain ATCC 29366 / DSM 635 / J-10-fl).